The primary structure comprises 304 residues: UDP-3-O-acyl-N-acetylglucosamine deacetylase (304 aa).

Positions 78, 237, and 241 each coordinate Zn(2+). The Proton donor role is filled by histidine 264.

Belongs to the LpxC family. Zn(2+) serves as cofactor.

It carries out the reaction a UDP-3-O-[(3R)-3-hydroxyacyl]-N-acetyl-alpha-D-glucosamine + H2O = a UDP-3-O-[(3R)-3-hydroxyacyl]-alpha-D-glucosamine + acetate. The protein operates within glycolipid biosynthesis; lipid IV(A) biosynthesis; lipid IV(A) from (3R)-3-hydroxytetradecanoyl-[acyl-carrier-protein] and UDP-N-acetyl-alpha-D-glucosamine: step 2/6. In terms of biological role, catalyzes the hydrolysis of UDP-3-O-myristoyl-N-acetylglucosamine to form UDP-3-O-myristoylglucosamine and acetate, the committed step in lipid A biosynthesis. This Xylella fastidiosa (strain 9a5c) protein is UDP-3-O-acyl-N-acetylglucosamine deacetylase.